The chain runs to 22 residues: 50 kDa cell wall protein (22 aa).

Its subcellular location is the secreted. It is found in the cell wall. In Nicotiana tabacum (Common tobacco), this protein is 50 kDa cell wall protein.